The primary structure comprises 243 residues: Octanoyltransferase (243 aa).

In terms of domain architecture, BPL/LPL catalytic spans 49–227; it reads PLAPQAVWLL…SLSDRFGLVW (179 aa). Substrate contacts are provided by residues 91-98, 158-160, and 171-173; these read RGGEVTHH, AIG, and GLA. Cysteine 189 functions as the Acyl-thioester intermediate in the catalytic mechanism.

Belongs to the LipB family.

The protein localises to the cytoplasm. The catalysed reaction is octanoyl-[ACP] + L-lysyl-[protein] = N(6)-octanoyl-L-lysyl-[protein] + holo-[ACP] + H(+). It participates in protein modification; protein lipoylation via endogenous pathway; protein N(6)-(lipoyl)lysine from octanoyl-[acyl-carrier-protein]: step 1/2. Functionally, catalyzes the transfer of endogenously produced octanoic acid from octanoyl-acyl-carrier-protein onto the lipoyl domains of lipoate-dependent enzymes. Lipoyl-ACP can also act as a substrate although octanoyl-ACP is likely to be the physiological substrate. This chain is Octanoyltransferase, found in Prochlorococcus marinus (strain MIT 9313).